The chain runs to 833 residues: Ventricular zone-expressed PH domain-containing protein homolog 1 (833 aa).

The segment at 201–319 is interaction with TGFBR1; that stretch reads TELLALMSQL…TYLVSQLANM (119 aa). The tract at residues 458-505 is disordered; the sequence is KGVGSDDGEDENRGDIPASISLSEIDPLGQGNDKLPFKTDTERSQLGE. Over residues 492–502 the composition is skewed to basic and acidic residues; it reads LPFKTDTERSQ. An interaction with TGFBR1 region spans residues 663-833; that stretch reads ESTFPQQKDL…RESREVTTYL (171 aa). In terms of domain architecture, PH spans 716–819; that stretch reads QPLIEGKLKE…WLQCINVAVA (104 aa).

The protein belongs to the MELT/VEPH family. In terms of assembly, interacts with TGFBR1.

The protein localises to the cell membrane. Functionally, interacts with TGF-beta receptor type-1 (TGFBR1) and inhibits dissociation of activated SMAD2 from TGFBR1, impeding its nuclear accumulation and resulting in impaired TGF-beta signaling. May also affect FOXO, Hippo and Wnt signaling. In Homo sapiens (Human), this protein is Ventricular zone-expressed PH domain-containing protein homolog 1 (VEPH1).